A 194-amino-acid chain; its full sequence is ATP-dependent Clp protease proteolytic subunit (194 aa).

The Nucleophile role is filled by Ser-97. The active site involves His-122.

It belongs to the peptidase S14 family. As to quaternary structure, fourteen ClpP subunits assemble into 2 heptameric rings which stack back to back to give a disk-like structure with a central cavity, resembling the structure of eukaryotic proteasomes.

The protein resides in the cytoplasm. It carries out the reaction Hydrolysis of proteins to small peptides in the presence of ATP and magnesium. alpha-casein is the usual test substrate. In the absence of ATP, only oligopeptides shorter than five residues are hydrolyzed (such as succinyl-Leu-Tyr-|-NHMec, and Leu-Tyr-Leu-|-Tyr-Trp, in which cleavage of the -Tyr-|-Leu- and -Tyr-|-Trp bonds also occurs).. In terms of biological role, cleaves peptides in various proteins in a process that requires ATP hydrolysis. Has a chymotrypsin-like activity. Plays a major role in the degradation of misfolded proteins. The protein is ATP-dependent Clp protease proteolytic subunit of Campylobacter jejuni subsp. jejuni serotype O:23/36 (strain 81-176).